The primary structure comprises 192 residues: Ribosome maturation factor RimM (192 aa).

The PRC barrel domain occupies 97 to 172; it reads EDEYYLADLI…VVLADPPALV (76 aa). The segment at 168-192 is disordered; the sequence is PPALVGEPEGPESPAEDDDGERHYD.

Belongs to the RimM family. Binds ribosomal protein uS19.

The protein localises to the cytoplasm. An accessory protein needed during the final step in the assembly of 30S ribosomal subunit, possibly for assembly of the head region. Essential for efficient processing of 16S rRNA. May be needed both before and after RbfA during the maturation of 16S rRNA. It has affinity for free ribosomal 30S subunits but not for 70S ribosomes. This chain is Ribosome maturation factor RimM, found in Caulobacter sp. (strain K31).